The primary structure comprises 118 residues: Small ribosomal subunit protein uS13 (118 aa).

The disordered stretch occupies residues 94-118 (SLPVRGQRTKTNARTRKGPRKAIKK).

This sequence belongs to the universal ribosomal protein uS13 family. As to quaternary structure, part of the 30S ribosomal subunit. Forms a loose heterodimer with protein S19. Forms two bridges to the 50S subunit in the 70S ribosome.

In terms of biological role, located at the top of the head of the 30S subunit, it contacts several helices of the 16S rRNA. In the 70S ribosome it contacts the 23S rRNA (bridge B1a) and protein L5 of the 50S subunit (bridge B1b), connecting the 2 subunits; these bridges are implicated in subunit movement. Contacts the tRNAs in the A and P-sites. The protein is Small ribosomal subunit protein uS13 of Aeromonas hydrophila subsp. hydrophila (strain ATCC 7966 / DSM 30187 / BCRC 13018 / CCUG 14551 / JCM 1027 / KCTC 2358 / NCIMB 9240 / NCTC 8049).